The chain runs to 159 residues: 6,7-dimethyl-8-ribityllumazine synthase (159 aa).

5-amino-6-(D-ribitylamino)uracil contacts are provided by residues Trp-28, 59–61 (ALE), and 81–83 (CVI). 86–87 (GT) lines the (2S)-2-hydroxy-3-oxobutyl phosphate pocket. His-89 serves as the catalytic Proton donor. Asn-114 contacts 5-amino-6-(D-ribitylamino)uracil. (2S)-2-hydroxy-3-oxobutyl phosphate is bound at residue Arg-128.

It belongs to the DMRL synthase family.

It catalyses the reaction (2S)-2-hydroxy-3-oxobutyl phosphate + 5-amino-6-(D-ribitylamino)uracil = 6,7-dimethyl-8-(1-D-ribityl)lumazine + phosphate + 2 H2O + H(+). It functions in the pathway cofactor biosynthesis; riboflavin biosynthesis; riboflavin from 2-hydroxy-3-oxobutyl phosphate and 5-amino-6-(D-ribitylamino)uracil: step 1/2. Functionally, catalyzes the formation of 6,7-dimethyl-8-ribityllumazine by condensation of 5-amino-6-(D-ribitylamino)uracil with 3,4-dihydroxy-2-butanone 4-phosphate. This is the penultimate step in the biosynthesis of riboflavin. In Corynebacterium kroppenstedtii (strain DSM 44385 / JCM 11950 / CIP 105744 / CCUG 35717), this protein is 6,7-dimethyl-8-ribityllumazine synthase.